We begin with the raw amino-acid sequence, 514 residues long: 2-isopropylmalate synthase (514 aa).

Positions 5-268 constitute a Pyruvate carboxyltransferase domain; that stretch reads LIIFDTTLRD…DVGLDTTQIV (264 aa). Asp14, His202, His204, and Asn239 together coordinate Mn(2+). The tract at residues 395–514 is regulatory domain; it reads KFVSLSQRSE…KDDKLNPQRS (120 aa).

This sequence belongs to the alpha-IPM synthase/homocitrate synthase family. LeuA type 1 subfamily. In terms of assembly, homodimer. The cofactor is Mn(2+).

It is found in the cytoplasm. The catalysed reaction is 3-methyl-2-oxobutanoate + acetyl-CoA + H2O = (2S)-2-isopropylmalate + CoA + H(+). It participates in amino-acid biosynthesis; L-leucine biosynthesis; L-leucine from 3-methyl-2-oxobutanoate: step 1/4. Its function is as follows. Catalyzes the condensation of the acetyl group of acetyl-CoA with 3-methyl-2-oxobutanoate (2-ketoisovalerate) to form 3-carboxy-3-hydroxy-4-methylpentanoate (2-isopropylmalate). The sequence is that of 2-isopropylmalate synthase from Burkholderia ambifaria (strain ATCC BAA-244 / DSM 16087 / CCUG 44356 / LMG 19182 / AMMD) (Burkholderia cepacia (strain AMMD)).